Reading from the N-terminus, the 204-residue chain is Glycerol-3-phosphate acyltransferase (204 aa).

5 consecutive transmembrane segments (helical) span residues 8 to 28, 53 to 73, 81 to 101, 116 to 136, and 155 to 175; these read ILIF…CYIF, VPAA…VVIA, FITA…IFFG, FGFS…VAII, and VIFT…IIIL.

This sequence belongs to the PlsY family. In terms of assembly, probably interacts with PlsX.

It is found in the cell inner membrane. The catalysed reaction is an acyl phosphate + sn-glycerol 3-phosphate = a 1-acyl-sn-glycero-3-phosphate + phosphate. It functions in the pathway lipid metabolism; phospholipid metabolism. In terms of biological role, catalyzes the transfer of an acyl group from acyl-phosphate (acyl-PO(4)) to glycerol-3-phosphate (G3P) to form lysophosphatidic acid (LPA). This enzyme utilizes acyl-phosphate as fatty acyl donor, but not acyl-CoA or acyl-ACP. This is Glycerol-3-phosphate acyltransferase from Francisella tularensis subsp. novicida (strain U112).